The sequence spans 330 residues: MKIVVLGAGAWGTALAISAAAHAACHEVQLWARDAQQAQAMQAKRQNQRYLPGLAFPPGLHVASGDMAALAADADLVVVGTPMAALRGMLERLDGCAAPIAWLCKGFEAGTGLMAHEVCAQVAPRLHSGVFSGPSFAQEVATAQPTAMVAASPRATVRDALVQAFHGPALRVYASEDIVGVEVGGAVKNVLAIATGLCDGLQLGMNARAALITRGLAEMTRLGLALGARPETFMGLSGLGDLVLTATGDLSRNRRVGLLLAEGRTLAQAVESLGHVAEGVYSARTVVQRARAVGVEMPIAECVVALLDGELRAAETVARLMEREPTVERH.

NADPH contacts are provided by tryptophan 11, arginine 33, and lysine 105. The sn-glycerol 3-phosphate site is built by lysine 105, glycine 133, and serine 135. Alanine 137 lines the NADPH pocket. Residues lysine 188, aspartate 241, serine 251, arginine 252, and asparagine 253 each coordinate sn-glycerol 3-phosphate. Lysine 188 (proton acceptor) is an active-site residue. Arginine 252 serves as a coordination point for NADPH. NADPH-binding residues include valine 276 and glutamate 278.

The protein belongs to the NAD-dependent glycerol-3-phosphate dehydrogenase family.

The protein resides in the cytoplasm. The catalysed reaction is sn-glycerol 3-phosphate + NAD(+) = dihydroxyacetone phosphate + NADH + H(+). The enzyme catalyses sn-glycerol 3-phosphate + NADP(+) = dihydroxyacetone phosphate + NADPH + H(+). It participates in membrane lipid metabolism; glycerophospholipid metabolism. Its function is as follows. Catalyzes the reduction of the glycolytic intermediate dihydroxyacetone phosphate (DHAP) to sn-glycerol 3-phosphate (G3P), the key precursor for phospholipid synthesis. The chain is Glycerol-3-phosphate dehydrogenase [NAD(P)+] from Acidovorax ebreus (strain TPSY) (Diaphorobacter sp. (strain TPSY)).